Here is a 609-residue protein sequence, read N- to C-terminus: NADH-ubiquinone oxidoreductase chain 5 (609 aa).

16 helical membrane-spanning segments follow: residues 3–23 (VINLFASSIITTLSMLTLPIV), 46–66 (AFMISMIPTTMFIYSGQEMII), 90–110 (MIFVPVALFVTWSIMEFSMWY), 115–135 (PFINRFFKYLLMFLITMMILV), 140–160 (LFQLFIGWEGVGIMSFLLIGW), 174–194 (AVLYNRIGDVGFIMAMAWFLI), 216–236 (LMGLLLAATGKSAQFGLHPWL), 244–264 (TPVSALLHSSTMVVAGVFLLI), 276–296 (MQTTTLCLGAITTLFTAICAL), 304–323 (IIAFSTSSQLGLMIVTIGIN), 328–350 (AFLHICTHAFFKAMLFMCSGSII), 368–388 (VLPFTTTSLIVGSLALTGMPF), 410–432 (WALLLTLVATSMTAAYSTRIMFF), 460–480 (LLLGSIFAGYLISYNITPTST), 485–505 (MPYYLKLTALTVTLLGFILAL), and 585–605 (GLIKLYFLSFIITLILALMMI).

The protein belongs to the complex I subunit 5 family.

The protein localises to the mitochondrion inner membrane. It carries out the reaction a ubiquinone + NADH + 5 H(+)(in) = a ubiquinol + NAD(+) + 4 H(+)(out). In terms of biological role, core subunit of the mitochondrial membrane respiratory chain NADH dehydrogenase (Complex I) that is believed to belong to the minimal assembly required for catalysis. Complex I functions in the transfer of electrons from NADH to the respiratory chain. The immediate electron acceptor for the enzyme is believed to be ubiquinone. This chain is NADH-ubiquinone oxidoreductase chain 5 (MT-ND5), found in Phoca vitulina (Harbor seal).